The primary structure comprises 120 residues: Large ribosomal subunit protein uL18 (120 aa).

It belongs to the universal ribosomal protein uL18 family. As to quaternary structure, part of the 50S ribosomal subunit; part of the 5S rRNA/L5/L18/L25 subcomplex. Contacts the 5S and 23S rRNAs.

In terms of biological role, this is one of the proteins that bind and probably mediate the attachment of the 5S RNA into the large ribosomal subunit, where it forms part of the central protuberance. The sequence is that of Large ribosomal subunit protein uL18 from Trichodesmium erythraeum (strain IMS101).